A 125-amino-acid polypeptide reads, in one-letter code: Small ribosomal subunit protein uS12m (125 aa).

The interval 1 to 51 is disordered; the sequence is MPTKNQLIRHGREEKRRTDRTRALDQCPQKQGVCPRVSTRTPKKPNSAPRK. The segment covering 10–23 has biased composition (basic and acidic residues); the sequence is HGREEKRRTDRTRA.

It belongs to the universal ribosomal protein uS12 family.

It localises to the mitochondrion. In terms of biological role, protein S12 is involved in the translation initiation step. This chain is Small ribosomal subunit protein uS12m (RPS12), found in Nicotiana sylvestris (Wood tobacco).